The following is a 435-amino-acid chain: GTPase Obg (435 aa).

In terms of domain architecture, Obg spans 1-158; sequence MFLDTAKVSV…RQLELELKIL (158 aa). Positions 159-336 constitute an OBG-type G domain; that stretch reads ADVGLVGFPS…LLEATAELLA (178 aa). Residues 165–172, 190–194, 212–215, 282–285, and 317–319 contribute to the GTP site; these read GFPSVGKS, FTTIV, DLPG, NKMD, and SSL. The Mg(2+) site is built by Ser-172 and Thr-192. The region spanning 357-435 is the OCT domain; it reads GFAAEEKAFE…IGKFEFEFVD (79 aa).

It belongs to the TRAFAC class OBG-HflX-like GTPase superfamily. OBG GTPase family. In terms of assembly, monomer. Requires Mg(2+) as cofactor.

It is found in the cytoplasm. In terms of biological role, an essential GTPase which binds GTP, GDP and possibly (p)ppGpp with moderate affinity, with high nucleotide exchange rates and a fairly low GTP hydrolysis rate. Plays a role in control of the cell cycle, stress response, ribosome biogenesis and in those bacteria that undergo differentiation, in morphogenesis control. The polypeptide is GTPase Obg (Streptococcus equi subsp. zooepidemicus (strain MGCS10565)).